The primary structure comprises 287 residues: tRNA pseudouridine synthase B (287 aa).

Aspartate 37 serves as the catalytic Nucleophile.

It belongs to the pseudouridine synthase TruB family. Type 1 subfamily.

It catalyses the reaction uridine(55) in tRNA = pseudouridine(55) in tRNA. Responsible for synthesis of pseudouridine from uracil-55 in the psi GC loop of transfer RNAs. This is tRNA pseudouridine synthase B from Caldicellulosiruptor saccharolyticus (strain ATCC 43494 / DSM 8903 / Tp8T 6331).